The primary structure comprises 394 residues: Phosphoglycerate kinase (394 aa).

Substrate-binding positions include 21 to 23, R36, 59 to 62, R118, and R151; these read DFN and HMGR. Residues K202, E324, and 350–353 contribute to the ATP site; that span reads GGDS.

Belongs to the phosphoglycerate kinase family. As to quaternary structure, monomer.

It is found in the cytoplasm. The enzyme catalyses (2R)-3-phosphoglycerate + ATP = (2R)-3-phospho-glyceroyl phosphate + ADP. Its pathway is carbohydrate degradation; glycolysis; pyruvate from D-glyceraldehyde 3-phosphate: step 2/5. The protein is Phosphoglycerate kinase of Exiguobacterium sibiricum (strain DSM 17290 / CCUG 55495 / CIP 109462 / JCM 13490 / 255-15).